We begin with the raw amino-acid sequence, 175 residues long: MLQEQPVALSFRPNSFRRRSMETGVDRDDRGWTQLHIKAREGDLKAVKELLDQGADVNALACGPKSKGMTPLHLAAKGGHIEVMDLLLERGANMEARTSGACGWTPLHAAAKERKREAVKFLVGNGAFLPDDITDSRFNPPVQYCHGLEWAYEERKKLSEDTSLSCGDTSCSSAN.

3 ANK repeats span residues 30–59 (RGWTQLHIKAREGDLKAVKELLDQGADVNA), 67–96 (KGMTPLHLAAKGGHIEVMDLLLERGANMEA), and 102–131 (CGWTPLHAAAKERKREAVKFLVGNGAFLPD).

Interacts with phytochrome A (PHYA), both in Pr and Pfr forms.

It localises to the cytoplasm. The protein localises to the nucleus. The protein resides in the mitochondrion. This Arabidopsis thaliana (Mouse-ear cress) protein is Phytochrome-interacting ankyrin-repeat protein 1.